The chain runs to 1271 residues: Zinc finger transcription factor Trps1 (1271 aa).

2 disordered regions span residues 1–76 (MVRK…DSAS) and 124–155 (SPIKSEADDTQELASSASVDSLEAKEENDMSP). Residues 34–49 (SKEISTDPMQENSEQS) are compositionally biased toward polar residues. Residues 54–65 (HNSDDHSFHDQE) are compositionally biased toward basic and acidic residues. The segment covering 66-76 (PSSSINKDSAS) has biased composition (polar residues). Residues 217-242 (FKCNICGYGYYGNDPTDLIKHFRKYH) form a C2H2-type 1; atypical zinc finger. Residues 328–353 (FRCKFCNFTYLAKSATELEQHFLKTH) form a C2H2-type 2; atypical zinc finger. Residues 353-387 (HPNKMKMSSDSGKPSEKSTNKSSPIPRSCEPGDLG) form a disordered region. A C2H2-type 3; atypical zinc finger spans residues 426-451 (YWCKFCSFSCESSSNSKLLEHHSKQH). The C2H2-type 4; atypical zinc-finger motif lies at 513–543 (YNCQFCDFRYSKSHGPEVILVGPLLRHYQQH). 3 C2H2-type zinc fingers span residues 604–627 (HQCDQCSFSSPDVDVLLLHYENAH), 656–679 (HSCTKCDFIVQVEEDLPRHYRRVH), and 682–705 (YKCRQCNFTAADTQSLLDHFNSAH). Residues 843 to 877 (GVTAGASGEKSGQHTPQYPTAGDSKSKDESQSLLR) are disordered. A GATA-type zinc finger spans residues 886–910 (CANCLTTKTSLWRKNANGGYVCNAC). Disordered regions lie at residues 938-987 (RTRK…RENQ), 1031-1064 (SPQESSGEPGNSSSVSDGKGSSERGSPIEKYMRP), and 1154-1196 (LDLA…EKSD). Positions 972-985 (IRSEDHSMEGHQRE) are enriched in basic and acidic residues. Residues 1031 to 1049 (SPQESSGEPGNSSSVSDGK) are compositionally biased toward low complexity. Basic and acidic residues-rich tracts occupy residues 1050 to 1062 (GSSERGSPIEKYM) and 1170 to 1196 (DSKEKSKSPVSVKDDGPLNVTKIEKSD). A transcriptional repressor domain region spans residues 1153-1271 (PLDLAMKHSR…QAEKNGKNKD (119 aa)). Residues Lys-1182 and Lys-1191 each participate in a glycyl lysine isopeptide (Lys-Gly) (interchain with G-Cter in SUMO) cross-link. C2H2-type zinc fingers lie at residues 1205–1227 (TKCVHCGIVFLDEVMYALHMSCH) and 1233–1257 (FQCSICQHLCTDKYDFTTHIQRGLH).

As to quaternary structure, binds specifically to GATA sequences. Sumoylated. Sumoylation in the repressor domain inhibits the transcription repression activity. Sumoylation on Lys-1191 is the major site. Appears to be sumoylated on multiple sites.

The protein localises to the nucleus. Its function is as follows. Transcriptional repressor. Represses expression of GATA-regulated genes at selected sites and stages in vertebrate development. In Xenopus laevis (African clawed frog), this protein is Zinc finger transcription factor Trps1 (trps1).